The primary structure comprises 221 residues: Leucine rich adaptor protein 1-like (221 aa).

Methionine 1 carries the post-translational modification N-acetylmethionine. The interval 1-81 is disordered; the sequence is MEDGPLPDLR…SGSPRRSHPS (81 aa). 2 stretches are compositionally biased toward basic and acidic residues: residues 8–21 and 28–39; these read DLRD…RKVP and LRGEEPAPREGA. The segment covering 48–75 has biased composition (low complexity); sequence SCSSSSSCSSFAPSVSSSSSSSPASGSP.

In Rattus norvegicus (Rat), this protein is Leucine rich adaptor protein 1-like (Lurap1l).